The sequence spans 126 residues: Large ribosomal subunit protein bL12 (126 aa).

The protein belongs to the bacterial ribosomal protein bL12 family. Homodimer. Part of the ribosomal stalk of the 50S ribosomal subunit. Forms a multimeric L10(L12)X complex, where L10 forms an elongated spine to which 2 to 4 L12 dimers bind in a sequential fashion. Binds GTP-bound translation factors.

Its function is as follows. Forms part of the ribosomal stalk which helps the ribosome interact with GTP-bound translation factors. Is thus essential for accurate translation. In Coxiella burnetii (strain CbuK_Q154) (Coxiella burnetii (strain Q154)), this protein is Large ribosomal subunit protein bL12.